We begin with the raw amino-acid sequence, 895 residues long: Zinc finger protein 281 (895 aa).

2 disordered regions span residues 1–44 and 63–113; these read MKIG…EMEP and FTRP…AFPS. K2 participates in a covalent cross-link: Glycyl lysine isopeptide (Lys-Gly) (interchain with G-Cter in SUMO2). Positions 7 to 36 are enriched in gly residues; it reads FLSGGGGTGSSGGSGSGGGGSGGGGGGGSS. Glycyl lysine isopeptide (Lys-Gly) (interchain with G-Cter in SUMO2) cross-links involve residues R65, K101, and K128. 2 stretches are compositionally biased toward basic and acidic residues: residues 130-140 and 202-218; these read EKPADPEEQQS and RTDDHHGTEEPKQDTNV. Disordered stretches follow at residues 130–149 and 183–253; these read EKPADPEEQQSHHHHHHHHY and HVQQ…EGAI. Residues K213, K219, K225, K232, K242, and K259 each participate in a glycyl lysine isopeptide (Lys-Gly) (interchain with G-Cter in SUMO2) cross-link. 3 consecutive C2H2-type zinc fingers follow at residues 261-283, 289-311, and 317-339; these read HICDHCSAAFRSSYHLRRHVLIH, FQCSQCSMGFIQKYLLQRHEKIH, and FGCDQCSMKFIQKYHMERHKRTH. Glycyl lysine isopeptide (Lys-Gly) (interchain with G-Cter in SUMO2) cross-links involve residues K301 and K325. Residues 345 to 367 form a C2H2-type 4; atypical zinc finger; that stretch reads YKCDTCQQYFSRTDRLLKHRRTC. A Glycyl lysine isopeptide (Lys-Gly) (interchain with G-Cter in SUMO2) cross-link involves residue K373. Residues 377 to 427 are disordered; the sequence is SAEPGSSNHTNMGNLAVLSQGNTSSSRRKTKSKSIAIENKEQKTGKTNESQ. Polar residues predominate over residues 379 to 398; sequence EPGSSNHTNMGNLAVLSQGN. Position 395 is a phosphoserine (S395). Residues K409, K416, K460, and K477 each participate in a glycyl lysine isopeptide (Lys-Gly) (interchain with G-Cter in SUMO2) cross-link. Residue S484 is modified to Phosphoserine. Glycyl lysine isopeptide (Lys-Gly) (interchain with G-Cter in SUMO2) cross-links involve residues K493, K498, K539, K599, K617, and K622. A disordered region spans residues 638-660; it reads SGEHSELVQEENLSPGTQTPSND. Polar residues predominate over residues 648 to 660; that stretch reads ENLSPGTQTPSND. S651 is subject to Phosphoserine. Glycyl lysine isopeptide (Lys-Gly) (interchain with G-Cter in SUMO2) cross-links involve residues K661 and K670. Polar residues predominate over residues 778–789; sequence SSAFQSSSQKLT. The interval 778–817 is disordered; sequence SSAFQSSSQKLTSQKEQKNLESSTGFQIPSQELASQIDPQ. Residue S785 is modified to Phosphoserine. Glycyl lysine isopeptide (Lys-Gly) (interchain with G-Cter in SUMO2) cross-links involve residues K787, K792, and K795. Polar residues predominate over residues 797–815; sequence LESSTGFQIPSQELASQID. Phosphoserine is present on S807. Glycyl lysine isopeptide (Lys-Gly) (interchain with G-Cter in SUMO2) cross-links involve residues K818 and K840. At T888 the chain carries Phosphothreonine.

It belongs to the krueppel C2H2-type zinc-finger protein family.

The protein resides in the nucleus. In terms of biological role, transcription repressor that plays a role in regulation of embryonic stem cells (ESCs) differentiation. Required for ESCs differentiation and acts by mediating autorepression of NANOG in ESCs: binds to the NANOG promoter and promotes association of NANOG protein to its own promoter and recruits the NuRD complex, which deacetylates histones. Not required for establishement and maintenance of ESCs. Represses the transcription of a number of genes including GAST, ODC1 and VIM. Binds to the G-rich box in the enhancer region of these genes. This is Zinc finger protein 281 (ZNF281) from Homo sapiens (Human).